A 503-amino-acid chain; its full sequence is 26S proteasome non-ATPase regulatory subunit 5 (503 aa).

Residue A2 is modified to N-acetylalanine.

Belongs to the proteasome subunit S5B/HSM3 family. Interacts with PSMC1, PSMC2, PSMD1 and PSMD6. Part of transient complex containing PSMD5, PSMC2, PSMC1 and PSMD2 formed during the assembly of the 26S proteasome.

Acts as a chaperone during the assembly of the 26S proteasome, specifically of the base subcomplex of the PA700/19S regulatory complex (RC). In the initial step of the base subcomplex assembly is part of an intermediate PSMD5:PSMC2:PSMC1:PSMD2 module which probably assembles with a PSMD10:PSMC4:PSMC5:PAAF1 module followed by dissociation of PSMD5. The polypeptide is 26S proteasome non-ATPase regulatory subunit 5 (PSMD5) (Bos taurus (Bovine)).